The sequence spans 116 residues: MSNKVQRFIEAERELSQLKHWLKTTHKISIEEFVVLFKVYEAEKISGKELRDTLHFEMLWDTSKIDVIIRKIYKKELISKLRSETDERQVFYFYSTSQKKLLDKITKEIEVLSVTN.

The segment at residues 51 to 74 (RDTLHFEMLWDTSKIDVIIRKIYK) is a DNA-binding region (H-T-H motif).

It belongs to the SarA family.

The protein localises to the cytoplasm. Its function is as follows. Part of the pathway by which MgrA and SarA control autolysis. The chain is HTH-type transcriptional regulator SarV (sarV) from Staphylococcus aureus (strain Mu50 / ATCC 700699).